Here is a 956-residue protein sequence, read N- to C-terminus: METQELRGALALLLLCFFTSASQDLQVIDLLTVGESRQMVAVAEKIRTALLTAGDIYLLSTFRLPPKQGGVLFGLYSRQDNTRWLEASVVGKINKVLVRYQREDGKVHAVNLQQAGLADGRTHTVLLRLRGPSRPSPALHLYVDCKLGDQHAGLPALAPIPPAEVDGLEIRTGQKAYLRMQGFVESMKIILGGSMARVGALSECPFQGDESIHSAVTNALHSILGEQTKALVTQLTLFNQILVELRDDIRDQVKEMSLIRNTIMECQVCGFHEQRSHCSPNPCFRGVDCMEVYEYPGYRCGPCPPGLQGNGTHCSDINECAHADPCFPGSSCINTMPGFHCEACPRGYKGTQVSGVGIDYARASKQVCNDIDECNDGNNGGCDPNSICTNTVGSFKCGPCRLGFLGNQSQGCLPARTCHSPAHSPCHIHAHCLFERNGAVSCQCNVGWAGNGNVCGTDTDIDGYPDQALPCMDNNKHCKQDNCLLTPNSGQEDADNDGVGDQCDDDADGDGIKNVEDNCRLFPNKDQQNSDTDSFGDACDNCPNVPNNDQKDTDGNGEGDACDNDVDGDGIPNGLDNCPKVPNPLQTDRDEDGVGDACDSCPEMSNPTQTDADSDLVGDVCDTNEDSDGDGHQDTKDNCPQLPNSSQLDSDNDGLGDECDGDDDNDGIPDYVPPGPDNCRLVPNPNQKDSDGNGVGDVCEDDFDNDAVVDPLDVCPESAEVTLTDFRAYQTVVLDPEGDAQIDPNWVVLNQGMEIVQTMNSDPGLAVGYTAFNGVDFEGTFHVNTVTDDDYAGFLFSYQDSGRFYVVMWKQTEQTYWQATPFRAVAQPGLQLKAVTSVSGPGEHLRNALWHTGHTPDQVRLLWTDPRNVGWRDKTSYRWQLLHRPQVGYIRVKLYEGPQLVADSGVIIDTSMRGGRLGVFCFSQENIIWSNLQYRCNDTVPEDFEPFRRQLLQGRV.

An N-terminal signal peptide occupies residues 1–22 (METQELRGALALLLLCFFTSAS). The Laminin G-like domain maps to 23 to 193 (QDLQVIDLLT…VESMKIILGG (171 aa)). Disulfide bonds link C278–C289, C283–C300, C303–C314, C320–C332, C326–C341, C344–C368, C374–C388, C382–C397, C400–C412, C418–C432, C426–C442, C444–C455, C471–C478, C483–C503, C519–C539, C542–C562, C578–C598, C601–C621, C639–C659, C679–C699, and C715–C936. Residue N310 is glycosylated (N-linked (GlcNAc...) asparagine). Residues 316–354 (DINECAHADPCFPGSSCINTMPGFHCEACPRGYKGTQVS) form the EGF-like 1; calcium-binding domain. Residues 370-410 (DIDECNDGNNGGCDPNSICTNTVGSFKCGPCRLGFLGNQSQ) enclose the EGF-like 2; calcium-binding domain. N-linked (GlcNAc...) asparagine glycosylation is present at N407. Residues 414 to 456 (PARTCHSPAHSPCHIHAHCLFERNGAVSCQCNVGWAGNGNVCG) enclose the EGF-like 3 domain. TSP type-3 repeat units follow at residues 457-491 (TDTDIDGYPDQALPCMDNNKHCKQDNCLLTPNSGQ), 492-527 (EDADNDGVGDQCDDDADGDGIKNVEDNCRLFPNKDQ), 528-550 (QNSDTDSFGDACDNCPNVPNNDQ), 551-586 (KDTDGNGEGDACDNDVDGDGIPNGLDNCPKVPNPLQ), 587-609 (TDRDEDGVGDACDSCPEMSNPTQ), 610-647 (TDADSDLVGDVCDTNEDSDGDGHQDTKDNCPQLPNSSQ), 648-687 (LDSDNDGLGDECDGDDDNDGIPDYVPPGPDNCRLVPNPNQ), and 688-723 (KDSDGNGVGDVCEDDFDNDAVVDPLDVCPESAEVTL). Disordered stretches follow at residues 518–537 (NCRLFPNKDQQNSDTDSFGD) and 546–702 (PNND…CEDD). Residues 555 to 568 (GNGEGDACDNDVDG) show a composition bias toward acidic residues. Positions 612–628 (ADSDLVGDVCDTNEDSD) are enriched in acidic residues. N644 is a glycosylation site (N-linked (GlcNAc...) asparagine). Residues 650-667 (SDNDGLGDECDGDDDNDG) are compositionally biased toward acidic residues. Residues 727 to 941 (RAYQTVVLDP…LQYRCNDTVP (215 aa)) form the TSP C-terminal domain. N937 is a glycosylation site (N-linked (GlcNAc...) asparagine).

The protein belongs to the thrombospondin family. In terms of assembly, oligomer; disulfide-linked.

Functionally, adhesive glycoprotein that mediates cell-to-cell and cell-to-matrix interactions. Can bind to fibrinogen, fibronectin, laminin and type V collagen. The chain is Thrombospondin-3 (THBS3) from Homo sapiens (Human).